The chain runs to 1419 residues: Multidrug resistance protein 1 (1419 aa).

The tract at residues 1–37 is r domain; regulates transporter activity; the sequence is MGKEQKEKKDGNLSIKEEVEKELNKKSTAELFRKIKN. Residues 1–60 are Cytoplasmic-facing; the sequence is MGKEQKEKKDGNLSIKEEVEKELNKKSTAELFRKIKNEKISFFLPFKCLPAQHRKLLFIS. Residues 58-345 enclose the ABC transmembrane type-1 1 domain; that stretch reads FISFVCAVLS…ILPNITEYMK (288 aa). The helical transmembrane segment at 61 to 81 threads the bilayer; it reads FVCAVLSGGTLPFFISVFGVI. The Vacuolar segment spans residues 82-90; that stretch reads LKNMNLGDD. The helical transmembrane segment at 91-111 threads the bilayer; the sequence is INPIILSLVSIGLVQFILSMI. The Cytoplasmic segment spans residues 112–168; the sequence is SSYCMDVITSKILKTLKLEYLRSVFYQDGQFHDNNPGSKLRSDLDFYLEQVSSGIGT. A helical membrane pass occupies residues 169 to 189; sequence KFITIFTYASSFLGLYIWSLI. At 190-191 the chain is on the vacuolar side; it reads KN. A helical membrane pass occupies residues 192–212; that stretch reads ARLTLCITCVFPLIYVCGVIC. Over 213–275 the chain is Cytoplasmic; it reads NKKVKLNKKT…KYILKANFVE (63 aa). A helical transmembrane segment spans residues 276–296; it reads ALHIGLINGLILVSYAFGFWY. The Vacuolar segment spans residues 297–316; that stretch reads GTRIIINSATNQYPNNDFNG. A helical transmembrane segment spans residues 317-337; the sequence is ASVISILLGVLISMFMLTIIL. Residues 338–788 lie on the Cytoplasmic side of the membrane; it reads PNITEYMKAL…YKEIFSYKKD (451 aa). Residues 378 to 662 enclose the ABC transporter 1 domain; that stretch reads IEFKNVRFHY…NNNNNNNNNK (285 aa). Residues Y387, T389, R390, S415, C417, G418, K419, S420, T421, Q462, K562, S564, G566, and Q567 each coordinate ATP. Residue Q462 coordinates Mg(2+). Disordered stretches follow at residues 639–665 and 697–752; these read ERSD…KINN and SSNK…TAEN. Composition is skewed to low complexity over residues 643–665 and 697–715; these read NNNN…KINN and SSNK…NKSS. Positions 723–749 are enriched in polar residues; that stretch reads GNDADNMNSLSIHENENISNNRNCKNT. A helical transmembrane segment spans residues 789–809; the sequence is VTIIFFSILVAGGLYPVFALL. Residues 791-1083 enclose the ABC transmembrane type-1 2 domain; the sequence is IIFFSILVAG…GSYAGKLMSL (293 aa). Topologically, residues 810 to 829 are vacuolar; the sequence is YARYVSTLFDFANLEYNSNK. Residues 830–850 traverse the membrane as a helical segment; that stretch reads YSIYILLIAIAMFISETLKNY. The Cytoplasmic portion of the chain corresponds to 851–907; it reads YNNKIGEKVEKTMKRRLFENILYQEMSFFDQDKNTPGVLSAHINRDVHLLKTGLVNN. Transmembrane regions (helical) follow at residues 908-928 and 929-949; these read IVIF…SFYF and CPIV…VFAV. Residues 950-1032 are Cytoplasmic-facing; it reads RARLTKSKEI…RIIVNAALWG (83 aa). A helical transmembrane segment spans residues 1033-1053; sequence FSQSAQLFINSFAYWFGSFLI. At 1054–1057 the chain is on the vacuolar side; it reads KRGT. Residues 1058–1078 traverse the membrane as a helical segment; the sequence is ILVDDFMKSLFTFIFTGSYAG. The Cytoplasmic portion of the chain corresponds to 1079-1419; the sequence is KLMSLKGDSE…IYKKYVKLAK (341 aa). One can recognise an ABC transporter 2 domain in the interval 1126 to 1416; sequence VDIKDVNFRY…QDGIYKKYVK (291 aa). Positions 1135, 1138, 1163, 1164, 1166, 1167, 1168, 1169, 1256, 1312, 1313, 1315, and 1316 each coordinate ATP. Mg(2+) is bound at residue S1168. Residue Q1256 participates in Mg(2+) binding.

Belongs to the ABC transporter superfamily. ABCB family. Multidrug resistance exporter (TC 3.A.1.201) subfamily.

It is found in the vacuole membrane. It catalyses the reaction ATP + H2O + xenobioticSide 1 = ADP + phosphate + xenobioticSide 2.. In terms of biological role, energy-dependent efflux pump responsible for decreased drug accumulation in multidrug-resistant cells. Transports lumefantrine, mefloquine, chloroquine, quinine, quinidine, amodiaquine, piperaquine, dihydroartemisinin and quinacrine. The chain is Multidrug resistance protein 1 from Plasmodium falciparum (isolate 3D7).